The sequence spans 213 residues: Pyridoxine/pyridoxamine 5'-phosphate oxidase (213 aa).

Residues 57–62 (RIVLLR), 77–78 (FT), Arg83, Lys84, and Gln106 each bind FMN. Position 62 (Arg62) interacts with substrate. Substrate is bound by residues Tyr124, Arg128, and Ser132. Residues 135 to 163 (GARASDQSRPLPDRKTLQKRVEEEEARYP) are disordered. 141-142 (QS) is a binding site for FMN. Basic and acidic residues predominate over residues 145–163 (LPDRKTLQKRVEEEEARYP). Trp186 lines the FMN pocket. 192–194 (RLH) serves as a coordination point for substrate. Arg196 contacts FMN.

The protein belongs to the pyridoxamine 5'-phosphate oxidase family. In terms of assembly, homodimer. It depends on FMN as a cofactor.

The catalysed reaction is pyridoxamine 5'-phosphate + O2 + H2O = pyridoxal 5'-phosphate + H2O2 + NH4(+). It catalyses the reaction pyridoxine 5'-phosphate + O2 = pyridoxal 5'-phosphate + H2O2. The protein operates within cofactor metabolism; pyridoxal 5'-phosphate salvage; pyridoxal 5'-phosphate from pyridoxamine 5'-phosphate: step 1/1. It functions in the pathway cofactor metabolism; pyridoxal 5'-phosphate salvage; pyridoxal 5'-phosphate from pyridoxine 5'-phosphate: step 1/1. Functionally, catalyzes the oxidation of either pyridoxine 5'-phosphate (PNP) or pyridoxamine 5'-phosphate (PMP) into pyridoxal 5'-phosphate (PLP). This is Pyridoxine/pyridoxamine 5'-phosphate oxidase from Granulibacter bethesdensis (strain ATCC BAA-1260 / CGDNIH1).